Consider the following 114-residue polypeptide: Notch-regulated ankyrin repeat-containing protein (114 aa).

2 ANK repeats span residues 50 to 79 (EGQT…DIRL) and 83 to 112 (DGWS…YSSS).

The protein belongs to the NRARP family. Forms a ternary complex with the intracellular domain (ICD) of notch1 and rbpj/suh.

Its function is as follows. Promotes loss of intracellular domain (ICD) of Notch1 in embryos. By down-regulating ICD levels, could function as a negative feedback regulator of Notch signaling that attenuates ICD-mediated transcription. Involved in angiogenesis. May be involved in somitogenesis. The sequence is that of Notch-regulated ankyrin repeat-containing protein (nrarp) from Xenopus tropicalis (Western clawed frog).